The primary structure comprises 21 residues: Glutathione S-transferase 1 (21 aa).

Belongs to the GST superfamily. Phi family.

It catalyses the reaction RX + glutathione = an S-substituted glutathione + a halide anion + H(+). Conjugation of reduced glutathione to a wide number of exogenous and endogenous hydrophobic electrophiles. In plants, may have a detoxification role against certain herbicides. This Populus euphratica (Euphrates poplar) protein is Glutathione S-transferase 1.